Here is an 844-residue protein sequence, read N- to C-terminus: Elongation factor 2 (844 aa).

The region spanning 17–255 (TNVRNMSVIA…LWGDNYFNPK (239 aa)) is the tr-type G domain. 26-33 (AHVDHGKS) is a GTP binding site. Phosphothreonine occurs at positions 57 and 59. Residues 160–163 (NKVD) and 215–217 (SGL) each bind GTP. H700 carries the diphthamide modification.

The protein belongs to the TRAFAC class translation factor GTPase superfamily. Classic translation factor GTPase family. EF-G/EF-2 subfamily.

Its subcellular location is the cytoplasm. It catalyses the reaction GTP + H2O = GDP + phosphate + H(+). In terms of biological role, catalyzes the GTP-dependent ribosomal translocation step during translation elongation. During this step, the ribosome changes from the pre-translocational (PRE) to the post-translocational (POST) state as the newly formed A-site-bound peptidyl-tRNA and P-site-bound deacylated tRNA move to the P and E sites, respectively. Catalyzes the coordinated movement of the two tRNA molecules, the mRNA and conformational changes in the ribosome. This is Elongation factor 2 (cot-3) from Neurospora crassa (strain ATCC 24698 / 74-OR23-1A / CBS 708.71 / DSM 1257 / FGSC 987).